The following is a 948-amino-acid chain: RNA polymerase-associated protein RapA (948 aa).

The Helicase ATP-binding domain maps to 164-332 (EVADRSAPRV…FARLRLLDPN (169 aa)). Position 177–184 (177–184 (DEVGLGKT)) interacts with ATP. Positions 278–281 (DEAH) match the DEAH box motif. The Helicase C-terminal domain occupies 473 to 627 (RVDWLIDTLK…TCPTGNALQH (155 aa)).

It belongs to the SNF2/RAD54 helicase family. RapA subfamily. Interacts with the RNAP. Has a higher affinity for the core RNAP than for the holoenzyme. Its ATPase activity is stimulated by binding to RNAP.

In terms of biological role, transcription regulator that activates transcription by stimulating RNA polymerase (RNAP) recycling in case of stress conditions such as supercoiled DNA or high salt concentrations. Probably acts by releasing the RNAP, when it is trapped or immobilized on tightly supercoiled DNA. Does not activate transcription on linear DNA. Probably not involved in DNA repair. In Pseudomonas putida (strain W619), this protein is RNA polymerase-associated protein RapA.